We begin with the raw amino-acid sequence, 342 residues long: S-adenosylmethionine:tRNA ribosyltransferase-isomerase (342 aa).

The protein belongs to the QueA family. In terms of assembly, monomer.

The protein localises to the cytoplasm. It catalyses the reaction 7-aminomethyl-7-carbaguanosine(34) in tRNA + S-adenosyl-L-methionine = epoxyqueuosine(34) in tRNA + adenine + L-methionine + 2 H(+). The protein operates within tRNA modification; tRNA-queuosine biosynthesis. Transfers and isomerizes the ribose moiety from AdoMet to the 7-aminomethyl group of 7-deazaguanine (preQ1-tRNA) to give epoxyqueuosine (oQ-tRNA). The chain is S-adenosylmethionine:tRNA ribosyltransferase-isomerase from Campylobacter jejuni (strain RM1221).